Here is a 161-residue protein sequence, read N- to C-terminus: ATP synthase subunit b 1 (161 aa).

Residues 1-21 (MFATAEFWILACLVAFFAILG) traverse the membrane as a helical segment.

Belongs to the ATPase B chain family. F-type ATPases have 2 components, F(1) - the catalytic core - and F(0) - the membrane proton channel. F(1) has five subunits: alpha(3), beta(3), gamma(1), delta(1), epsilon(1). F(0) has three main subunits: a(1), b(2) and c(10-14). The alpha and beta chains form an alternating ring which encloses part of the gamma chain. F(1) is attached to F(0) by a central stalk formed by the gamma and epsilon chains, while a peripheral stalk is formed by the delta and b chains.

Its subcellular location is the cell inner membrane. Functionally, f(1)F(0) ATP synthase produces ATP from ADP in the presence of a proton or sodium gradient. F-type ATPases consist of two structural domains, F(1) containing the extramembraneous catalytic core and F(0) containing the membrane proton channel, linked together by a central stalk and a peripheral stalk. During catalysis, ATP synthesis in the catalytic domain of F(1) is coupled via a rotary mechanism of the central stalk subunits to proton translocation. Component of the F(0) channel, it forms part of the peripheral stalk, linking F(1) to F(0). The protein is ATP synthase subunit b 1 of Parvibaculum lavamentivorans (strain DS-1 / DSM 13023 / NCIMB 13966).